Reading from the N-terminus, the 215-residue chain is Cytochrome b6 (215 aa).

Residues 32–52 form a helical membrane-spanning segment; the sequence is IFYCLGGITLTCFLVQVATGF. Heme c is bound at residue Cys35. Positions 86 and 100 each coordinate heme b. 3 helical membrane passes run 90-110, 116-136, and 186-206; these read ASMMVLMMILHVFRVYLTGGF, LTWVTGVVLGVLTASFGVTGY, and LHTFVLPLLTAVFMLMHFPMI. His187 and His202 together coordinate heme b.

Belongs to the cytochrome b family. PetB subfamily. The 4 large subunits of the cytochrome b6-f complex are cytochrome b6, subunit IV (17 kDa polypeptide, PetD), cytochrome f and the Rieske protein, while the 4 small subunits are PetG, PetL, PetM and PetN. The complex functions as a dimer. The cofactor is heme b. Requires heme c as cofactor.

The protein localises to the plastid. It localises to the chloroplast thylakoid membrane. Component of the cytochrome b6-f complex, which mediates electron transfer between photosystem II (PSII) and photosystem I (PSI), cyclic electron flow around PSI, and state transitions. This is Cytochrome b6 from Lactuca sativa (Garden lettuce).